The primary structure comprises 371 residues: Phosphate acyltransferase (371 aa).

The protein belongs to the PlsX family. As to quaternary structure, homodimer. Probably interacts with PlsY.

The protein localises to the cytoplasm. It carries out the reaction a fatty acyl-[ACP] + phosphate = an acyl phosphate + holo-[ACP]. It participates in lipid metabolism; phospholipid metabolism. In terms of biological role, catalyzes the reversible formation of acyl-phosphate (acyl-PO(4)) from acyl-[acyl-carrier-protein] (acyl-ACP). This enzyme utilizes acyl-ACP as fatty acyl donor, but not acyl-CoA. The protein is Phosphate acyltransferase of Ruegeria pomeroyi (strain ATCC 700808 / DSM 15171 / DSS-3) (Silicibacter pomeroyi).